Consider the following 560-residue polypeptide: Protein SINE1 (560 aa).

An N-acetylglycine modification is found at Gly2. Residues 7–287 (PILRQELANL…VRGAAYEAMM (281 aa)) form an ARMADILLO-type fold region. In terms of domain architecture, KASH spans 517 to 560 (KKKKKKMSYAKLVIAISFVVVALFATVILMVNQDDDVGYYTVPT). A helical transmembrane segment spans residues 528–548 (LVIAISFVVVALFATVILMVN). Residues 557 to 560 (TVPT) carry the Required for nuclear localization motif.

As to quaternary structure, interacts with SUN1 and SUN2. Binds to F-actin. In terms of tissue distribution, preferentially expressed in guards cells, but also detected in root cells.

The protein resides in the nucleus membrane. In terms of biological role, plays a role in nucleus positioning in guard cells. The sequence is that of Protein SINE1 from Arabidopsis thaliana (Mouse-ear cress).